The sequence spans 596 residues: Elongation factor 4 (596 aa).

The 183-residue stretch at 2 to 184 folds into the tr-type G domain; the sequence is KHIRNFSIIA…VIVAKIPPPE (183 aa). GTP-binding positions include 14-19 and 131-134; these read DHGKST and NKID.

It belongs to the TRAFAC class translation factor GTPase superfamily. Classic translation factor GTPase family. LepA subfamily.

The protein localises to the cell inner membrane. The catalysed reaction is GTP + H2O = GDP + phosphate + H(+). Required for accurate and efficient protein synthesis under certain stress conditions. May act as a fidelity factor of the translation reaction, by catalyzing a one-codon backward translocation of tRNAs on improperly translocated ribosomes. Back-translocation proceeds from a post-translocation (POST) complex to a pre-translocation (PRE) complex, thus giving elongation factor G a second chance to translocate the tRNAs correctly. Binds to ribosomes in a GTP-dependent manner. This chain is Elongation factor 4, found in Shewanella sp. (strain W3-18-1).